The primary structure comprises 87 residues: Tachykinin-1 (87 aa).

Positions 1 to 22 (MIRVGLILCCIFIAGVFEASSA) are cleaved as a signal peptide. Residues 23–37 (DDMLTAHNLIKRSEV) constitute a propeptide that is removed on maturation. Methionine 49 carries the methionine amide modification. The propeptide occupies 52–87 (SEELTRRLIQHPGSMSETSKRGPPKKVSRRPYILKK). Residues 61-87 (QHPGSMSETSKRGPPKKVSRRPYILKK) form a disordered region. Over residues 73–87 (GPPKKVSRRPYILKK) the composition is skewed to basic residues.

Belongs to the tachykinin family. Expressed in the posterior salivary gland and more specifically in the mucus-secreting gland cells.

The protein resides in the secreted. Its function is as follows. Tachykinins are active peptides which excite neurons, evoke behavioral responses, are potent vasodilators and secretagogues, and contract (directly or indirectly) many smooth muscles. This chain is Tachykinin-1, found in Octopus vulgaris (Common octopus).